The sequence spans 201 residues: Pyrrolidone-carboxylate peptidase (201 aa).

Residues Glu-81, Cys-143, and His-168 contribute to the active site.

Belongs to the peptidase C15 family. In terms of assembly, homotetramer.

Its subcellular location is the cytoplasm. It carries out the reaction Release of an N-terminal pyroglutamyl group from a polypeptide, the second amino acid generally not being Pro.. Functionally, removes 5-oxoproline from various penultimate amino acid residues except L-proline. The sequence is that of Pyrrolidone-carboxylate peptidase (pcp) from Halalkalibacterium halodurans (strain ATCC BAA-125 / DSM 18197 / FERM 7344 / JCM 9153 / C-125) (Bacillus halodurans).